The sequence spans 440 residues: Chromosome partition protein MukF (440 aa).

Positions 208–236 are leucine-zipper; the sequence is LSETSGTLRELQDTLEAAGDKLQANLLRI.

It belongs to the MukF family. Interacts, and probably forms a ternary complex, with MukE and MukB via its C-terminal region. The complex formation is stimulated by calcium or magnesium. It is required for an interaction between MukE and MukB.

It is found in the cytoplasm. The protein resides in the nucleoid. Its function is as follows. Involved in chromosome condensation, segregation and cell cycle progression. May participate in facilitating chromosome segregation by condensation DNA from both sides of a centrally located replisome during cell division. Not required for mini-F plasmid partitioning. Probably acts via its interaction with MukB and MukE. Overexpression results in anucleate cells. It has a calcium binding activity. The chain is Chromosome partition protein MukF from Salmonella typhi.